Consider the following 756-residue polypeptide: MVLAAARVLLLTLAALGASGQGQMPLGGDLGPQMLRELQETNAALQDVRDLLRQQVKEITFLKNTVMECDACGMQPARTPKLTVRPLSQCSPGFCFPGVACTETANGARCGPCPEGFTGNGSHCADVNECTAHPCFPRVRCINTSPGFRCEACPPGFSGPTHEGVGLAFAKANKQVCTDINECETGQHNCVPNSVCVNTVGSFQCGPCQPGFVGDQASGCRRRPQRFCPDGTPSPCHEKADCVLERDGSRSCVCAVGWAGNGLICGRDTDLDGFPDEKLRCSERQCRKDNCVTVPNSGQEDVDQDGIGDACDPDADGDGVLNEKDNCPLVRNPDQRNTDGDKWGDACDNCRSQKNDDQKDTDKDGRGDACDDDIDGDRIRNPVDNCPKVPNSDQKDTDGDGVGDACDNCPQKSNADQRDVDHDFVGDACDSDQDQDGDGHQDSKDNCPTVPNSAQQDSDHDGQGDACDDDDDNDGVPDSRDNCRLVPNPGQEDMDRDGVGDACQGDFDADKVVDKIDVCPENAEVTLTDFRAFQTVVLDPEGDAQIDPNWVVLNQGMEIVQTMNSDPGLAVGYTAFNGVDFEGTFHVNTATDDDYAGFIFGYQDSSSFYVVMWKQMEQTYWQANPFRAVAEPGIQLKAVKSSTGPGEQLRNALWHTGDTASQVRLLWKDPRNVGWKDKTSYRWFLQHRPQVGYIRVRFYEGPELVADSNVILDTTMRGGRLGVFCFSQENIIWANLRYRCNDTIPEDYEAQRLLQA.

A signal peptide spans 1–20 (MVLAAARVLLLTLAALGASG). A COMP N-terminal region spans residues 22-85 (GQMPLGGDLG…PARTPKLTVR (64 aa)). The 40-residue stretch at 86–125 (PLSQCSPGFCFPGVACTETANGARCGPCPEGFTGNGSHCA) folds into the EGF-like 1 domain. 10 disulfide bridges follow: cysteine 90-cysteine 101, cysteine 95-cysteine 110, cysteine 113-cysteine 124, cysteine 130-cysteine 141, cysteine 135-cysteine 150, cysteine 183-cysteine 196, cysteine 190-cysteine 205, cysteine 228-cysteine 242, cysteine 236-cysteine 252, and cysteine 254-cysteine 265. Residue asparagine 120 is glycosylated (N-linked (GlcNAc...) asparagine). Residues 126–178 (DVNECTAHPCFPRVRCINTSPGFRCEACPPGFSGPTHEGVGLAFAKANKQVCT) form the EGF-like 2; calcium-binding domain. The EGF-like 3; calcium-binding domain maps to 179-218 (DINECETGQHNCVPNSVCVNTVGSFQCGPCQPGFVGDQAS). Residues 224 to 266 (PQRFCPDGTPSPCHEKADCVLERDGSRSCVCAVGWAGNGLICG) enclose the EGF-like 4 domain. TSP type-3 repeat units lie at residues 267 to 299 (RDTD…NSGQ), 300 to 335 (EDVD…NPDQ), 336 to 358 (RNTD…NDDQ), 359 to 394 (KDTD…NSDQ), 395 to 417 (KDTD…NADQ), 418 to 455 (RDVD…NSAQ), 456 to 491 (QDSD…NPGQ), and 492 to 527 (EDMD…EVTL). The disordered stretch occupies residues 322-502 (NEKDNCPLVR…DMDRDGVGDA (181 aa)). Composition is skewed to basic and acidic residues over residues 333–345 (PDQR…KWGD), 351–369 (RSQK…RGDA), and 415–425 (ADQRDVDHDFV). Positions 366-368 (RGD) match the Cell attachment site motif. A compositionally biased stretch (acidic residues) spans 466-475 (ACDDDDDNDG). The mediates cell survival and induction of the IAP family of survival proteins stretch occupies residues 526 to 756 (TLTDFRAFQT…DYEAQRLLQA (231 aa)). The TSP C-terminal domain maps to 531 to 745 (RAFQTVVLDP…LRYRCNDTIP (215 aa)). Asparagine 741 is a glycosylation site (N-linked (GlcNAc...) asparagine).

Belongs to the thrombospondin family. Pentamer; disulfide-linked. Exists in a more compact conformation in the presence of calcium and shows a more extended conformation in the absence of calcium. Interacts with ITGB3, ITGA5 and FN1. Binding to FN1 requires the presence of divalent cations (Ca(2+), Mg(2+) or Mn(2+)). The greatest amount of binding is seen in the presence of Mn(2+). Interacts with MATN1, MATN3, MATN4 and ACAN. Binds heparin, heparan sulfate and chondroitin sulfate. EDTA dimishes significantly its binding to ACAN and abolishes its binding to MATN3, MATN4 and chondroitin sulfate. Interacts with collagen I, II and IX, and interaction with these collagens is dependent on the presence of zinc ions. Interacts with ADAMTS12. Interacts with ITGA7. Requires Ca(2+) as cofactor. Proteolytically cleaved by metalloproteases ADAMTS4 and ADAMTS1 with ADAMTS4 showing more potent activity.

The protein resides in the secreted. Its subcellular location is the extracellular space. It is found in the extracellular matrix. Plays a role in the structural integrity of cartilage via its interaction with other extracellular matrix proteins such as the collagens and fibronectin. Can mediate the interaction of chondrocytes with the cartilage extracellular matrix through interaction with cell surface integrin receptors. Could play a role in the pathogenesis of osteoarthritis. Potent suppressor of apoptosis in both primary chondrocytes and transformed cells. Suppresses apoptosis by blocking the activation of caspase-3 and by inducing the IAP family of survival proteins (BIRC3, BIRC2, BIRC5 and XIAP). Essential for maintaining a vascular smooth muscle cells (VSMCs) contractile/differentiated phenotype under physiological and pathological stimuli. Maintains this phenotype of VSMCs by interacting with ITGA7. This is Cartilage oligomeric matrix protein (COMP) from Bos taurus (Bovine).